A 449-amino-acid chain; its full sequence is Glucose-6-phosphate isomerase (449 aa).

The active-site Proton donor is the glutamate 291. Residues histidine 312 and lysine 426 contribute to the active site.

It belongs to the GPI family.

The protein localises to the cytoplasm. It carries out the reaction alpha-D-glucose 6-phosphate = beta-D-fructose 6-phosphate. The protein operates within carbohydrate biosynthesis; gluconeogenesis. Its pathway is carbohydrate degradation; glycolysis; D-glyceraldehyde 3-phosphate and glycerone phosphate from D-glucose: step 2/4. Catalyzes the reversible isomerization of glucose-6-phosphate to fructose-6-phosphate. The sequence is that of Glucose-6-phosphate isomerase from Streptococcus thermophilus (strain CNRZ 1066).